A 514-amino-acid chain; its full sequence is Na(+)/H(+) antiporter NhaB (514 aa).

Helical transmembrane passes span 23 to 43, 52 to 72, 97 to 117, 120 to 140, 144 to 164, 202 to 222, 238 to 258, 303 to 323, 357 to 377, 391 to 411, 447 to 467, and 475 to 495; these read LALL…SFVA, IFTL…LLAI, LLLM…LFIF, LLLS…AAAF, FLDA…FYGI, LMMH…VGEP, FFLR…LTCM, AIIG…VGLI, LTVF…APII, LFYL…VGTI, ATPN…APLI, and VWMA…CVEF.

It belongs to the NhaB Na(+)/H(+) (TC 2.A.34) antiporter family.

Its subcellular location is the cell inner membrane. It carries out the reaction 2 Na(+)(in) + 3 H(+)(out) = 2 Na(+)(out) + 3 H(+)(in). Functionally, na(+)/H(+) antiporter that extrudes sodium in exchange for external protons. This chain is Na(+)/H(+) antiporter NhaB, found in Salmonella arizonae (strain ATCC BAA-731 / CDC346-86 / RSK2980).